Here is an 89-residue protein sequence, read N- to C-terminus: Small ribosomal subunit protein uS14A (89 aa).

Belongs to the universal ribosomal protein uS14 family. In terms of assembly, part of the 30S ribosomal subunit. Contacts proteins S3 and S10.

Binds 16S rRNA, required for the assembly of 30S particles and may also be responsible for determining the conformation of the 16S rRNA at the A site. The chain is Small ribosomal subunit protein uS14A from Streptococcus agalactiae serotype Ia (strain ATCC 27591 / A909 / CDC SS700).